A 2533-amino-acid polypeptide reads, in one-letter code: Highly reducing polyketide synthase azaB (2533 aa).

Residues 7-433 (TAPMAIIGMA…GSNAHAILES (427 aa)) form the Ketosynthase family 3 (KS3) domain. Residues cysteine 180, histidine 315, and histidine 355 each act as for beta-ketoacyl synthase activity in the active site. Residues 554–821 (WVFTGQGAQW…VEFESSFRHM (268 aa)) form a malonyl-CoA:ACP transacylase (MAT) domain region. Residues 946–1081 (SDLVGYSQPS…GRISVITTSD (136 aa)) form an N-terminal hotdog fold region. The PKS/mFAS DH domain occupies 946 to 1254 (SDLVGYSQPS…CQSLGRALDR (309 aa)). The interval 947-1251 (DLVGYSQPSI…GLTCQSLGRA (305 aa)) is dehydratase (DH) domain. The Proton acceptor; for dehydratase activity role is filled by histidine 978. The C-terminal hotdog fold stretch occupies residues 1097-1254 (YNRRIDPRYM…CQSLGRALDR (158 aa)). Aspartate 1163 functions as the Proton donor; for dehydratase activity in the catalytic mechanism. A methyltransferase (CMet) domain region spans residues 1419–1554 (TRQVSELVRL…GGKLILMETT (136 aa)). The interval 1839-2155 (GLIDTLVFHD…TGQHMGKIII (317 aa)) is enoyl reductase (ER) domain. The segment at 2178–2349 (ASYVIVGGLG…AVSLDLGIVR (172 aa)) is ketoreductase (KR) domain. Residues 2455 to 2532 (DAAALICQEL…DLSLRVATKR (78 aa)) form the Carrier domain. Serine 2492 bears the O-(pantetheine 4'-phosphoryl)serine mark.

Its pathway is secondary metabolite biosynthesis. Functionally, highly reducing polyketide synthase; part of the gene cluster that mediates the biosynthesis of azaphilones, a class of fungal metabolites characterized by a highly oxygenated pyrano-quinone bicyclic core and exhibiting a broad range of bioactivities. In the first step, the non-reducing polyketide synthase azaA forms the hexaketide precursor from successive condensations of five malonyl-CoA units, presumably with a simple acetyl-CoA starter unit. The reactive polyketide chain then undergoes a PT-mediated C2-C7 cyclization to afford the aromatic ring and is eventually released as an aldehyde through the R-domain. The putative ketoreductase azaE is proposed to catalyze the reduction of the terminal ketone resulting in the early culture product FK17-P2a. The monooxygenase azaH was demonstrated to be the only enzyme required to convert FK17-P2a to azanigerone E. AzaH first hydroxylates the benzaldehyde intermediate FK17-P2a at C4, which triggers the formation of the pyran-ring to afford azanigerone E. In parallel, the 2,4-dimethylhexanoyl chain is synthesized by the HR-PKS azaB and is proposed to be transferred to the C4-hydroxyl of azanigerone E by the acyltransferase azaD directly from the ACP domain of azaB. Alternatively, the 2,4-dimethyl-hexanoyl chain may be offloaded from the HR-PKS as a carboxylic acid and converted to an acyl-CoA by azaF. The resulting acyl-CoA molecule could then be taken up as a substrate by AzaD to form azanigerone B. To yield the carboxylic acid substituent in azanigerone A, the hydroxypropyl side chain of azanigerone B would need to undergo a C-C oxidative cleavage catalyzed by cytochrome P450 AzaI. AzaI is proposed to act on a vicinal diol that leads to a C-C bond scission either through an alkoxyradical intermediate or a peroxy complex. In the biosynthesis of azanigerone A, azanigerone B first undergoes hydroxylation at C10, possibly catalyzed by one of the two FAD-dependent monooxygenases encoded in the cluster, azaG or azaL, resulting in the vicinal diol azanigerone C. Oxidative cleavage of azanigerone C by azaI would yield the corresponding aldehyde derivative of azanigerone A. Finally, the dehydrogenase azaJ is proposed to convert the aldehyde functional group into the carboxylic acid, completing the conversion from azanigerone B to azanigerone A. Alternatively, the oxidation of aldehyde to carboxylic acid may be catalyzed by the same P450 enzyme azaI via consecutive oxidation or by endogenous alcohol dehydrogenase. The sequence is that of Highly reducing polyketide synthase azaB from Aspergillus niger (strain ATCC 1015 / CBS 113.46 / FGSC A1144 / LSHB Ac4 / NCTC 3858a / NRRL 328 / USDA 3528.7).